The following is a 119-amino-acid chain: Large ribosomal subunit protein uL22c (119 aa).

This sequence belongs to the universal ribosomal protein uL22 family. In terms of assembly, part of the 50S ribosomal subunit.

Its subcellular location is the plastid. The protein resides in the chloroplast. In terms of biological role, this protein binds specifically to 23S rRNA. Its function is as follows. The globular domain of the protein is located near the polypeptide exit tunnel on the outside of the subunit, while an extended beta-hairpin is found that lines the wall of the exit tunnel in the center of the 70S ribosome. This chain is Large ribosomal subunit protein uL22c (rpl22), found in Angiopteris evecta (Mule's foot fern).